A 478-amino-acid chain; its full sequence is Glutamate--tRNA ligase (478 aa).

The 'HIGH' region motif lies at 9–19 (PSPTGLLHIGT). The 'KMSKS' region signature appears at 248-252 (KLSKR). Lys-251 provides a ligand contact to ATP.

The protein belongs to the class-I aminoacyl-tRNA synthetase family. Glutamate--tRNA ligase type 1 subfamily. Monomer.

The protein localises to the cytoplasm. The catalysed reaction is tRNA(Glu) + L-glutamate + ATP = L-glutamyl-tRNA(Glu) + AMP + diphosphate. Catalyzes the attachment of glutamate to tRNA(Glu) in a two-step reaction: glutamate is first activated by ATP to form Glu-AMP and then transferred to the acceptor end of tRNA(Glu). The chain is Glutamate--tRNA ligase from Prochlorococcus marinus (strain MIT 9515).